A 416-amino-acid polypeptide reads, in one-letter code: Counting factor 60 (416 aa).

An N-terminal signal peptide occupies residues 1-22; sequence MIKKSALITLFLVSLILGVSLS. 5 N-linked (GlcNAc...) asparagine glycosylation sites follow: Asn-110, Asn-218, Asn-231, Asn-318, and Asn-411.

Belongs to the histidine acid phosphatase family. In terms of assembly, component of the counting factor (CF) complex, which includes cf60, cf50, cf45-1 and ctnA.

The protein resides in the secreted. Its function is as follows. Cell-counting factor that limits the maximum size of the multicellular structure. Does not possess acid phosphatase activity. Cells with decreased levels of this protein form large groups while cells overexpressing this protein form small groups. The protein is Counting factor 60 (cf60) of Dictyostelium discoideum (Social amoeba).